We begin with the raw amino-acid sequence, 109 residues long: Cell division protein ZapA (109 aa).

The stretch at 22 to 99 forms a coiled coil; that stretch reads EQQDALNMAA…IEQALLEQGR (78 aa).

It belongs to the ZapA family. Type 1 subfamily. As to quaternary structure, homodimer. Interacts with FtsZ.

Its subcellular location is the cytoplasm. Functionally, activator of cell division through the inhibition of FtsZ GTPase activity, therefore promoting FtsZ assembly into bundles of protofilaments necessary for the formation of the division Z ring. It is recruited early at mid-cell but it is not essential for cell division. The protein is Cell division protein ZapA of Yersinia pseudotuberculosis serotype O:1b (strain IP 31758).